The following is a 335-amino-acid chain: Nucleoid-associated protein PputGB1_0980 (335 aa).

The protein belongs to the YejK family.

Its subcellular location is the cytoplasm. It localises to the nucleoid. The protein is Nucleoid-associated protein PputGB1_0980 of Pseudomonas putida (strain GB-1).